Here is a 90-residue protein sequence, read N- to C-terminus: Accessory gland-specific peptide 26Ab (90 aa).

Positions 1–21 (MNYFAVLCIFSCICFWQFSDA) are cleaved as a signal peptide.

As to expression, main cells of the accessory glands of males.

The protein resides in the secreted. It localises to the extracellular space. Its function is as follows. This protein is transferred from male to female during mating and may affect egglaying and behavior after mating. The protein is Accessory gland-specific peptide 26Ab (Acp26Ab) of Drosophila simulans (Fruit fly).